We begin with the raw amino-acid sequence, 706 residues long: MNENKPGDSQNLACVFCRKNDDCPNKYGEKKTKEKWNLTVHYYCLLMSSGIWQRGKEEEGVYGFLIEDIRKEVNRASKLKCCVCKKNGASIGCVAPRCKRSYHFPCGLQRECIFQFTGNFASFCWNHRPVQIITSNNYRESLPCTICLEFIEPIPSYNILRSPCCKNAWFHRDCLQVQAINAGVFFFRCTICSNSDIFQKEMLRMGIHIPEKDASWELEENAYQELLQHHERCDVRRCRCKEGRDYNAPDSKWEIKRCQCCGSSGTHLACSSLRSWEQNWECLECRGIIYNSGEFQKAKKHVLPNSNNVGITDCLLEESSPKLPRQSPGSQSKDLLRQGSKFRRNVSTLLIELGFQIKKKTKRLYINKANIWTSALDAFRNRNFNPSYAIEVAYVIENDNFGSEHPGSKQEFLSLLMQHLENSSLFEGSLSKNLSLNSQALKENLYYEAGKMLAISLVHGGPSPGFFSKTLFNCLVYGPENTQPILDDVSDFDVAQIIIRINTATTVADLKSVINECYNYLELIGCLRLITTLSDKYMLVKDILVYHVIQRVQAPFESFKQGLKTLGVLEKIQAYPEAFCSILCHKPESLSAKILSDLFTVHTLPDVKALGFWNSYLQAVEDGKSTTTMEDILIFATGCSSIPPAGFKPTPSIECLPVDFPVGNKCNNCLAIPVTNTYKEFQENMDFTIRNTLKLEKEESSHYIGH.

The C2HC pre-PHD-type zinc-finger motif lies at 11–51; it reads NLACVFCRKNDDCPNKYGEKKTKEKWNLTVHYYCLLMSSGI. The PHD-type 1 zinc finger occupies 79 to 128; that stretch reads LKCCVCKKNGASIGCVAPRCKRSYHFPCGLQRECIFQFTGNFASFCWNHR. A PHD-type 2; degenerate zinc finger spans residues 143–193; it reads PCTICLEFIEPIPSYNILRSPCCKNAWFHRDCLQVQAINAGVFFFRCTICS. A PHD-type 3 zinc finger spans residues 237–286; the sequence is RCRCKEGRDYNAPDSKWEIKRCQCCGSSGTHLACSSLRSWEQNWECLECR. The HECT domain maps to 371–698; it reads IWTSALDAFR…IRNTLKLEKE (328 aa).

The protein localises to the nucleus. It is found in the nucleolus. The protein resides in the cytoplasm. It carries out the reaction S-ubiquitinyl-[E2 ubiquitin-conjugating enzyme]-L-cysteine + [acceptor protein]-L-lysine = [E2 ubiquitin-conjugating enzyme]-L-cysteine + N(6)-ubiquitinyl-[acceptor protein]-L-lysine.. It participates in protein modification; protein ubiquitination. In terms of biological role, E3 ubiquitin-protein ligase which accepts ubiquitin from an E2 ubiquitin-conjugating enzyme in the form of a thioester and then directly transfers the ubiquitin to targeted substrates. Essential in early embryonic development to prevent apoptotic death. This chain is G2/M phase-specific E3 ubiquitin-protein ligase (G2E3), found in Macaca fascicularis (Crab-eating macaque).